Consider the following 94-residue polypeptide: Small ribosomal subunit protein bS18 (94 aa).

The segment covering 1–11 (MANERPTSQQR) has biased composition (polar residues). Residues 1 to 24 (MANERPTSQQRPAGGPRKRRPFQR) are disordered.

Belongs to the bacterial ribosomal protein bS18 family. In terms of assembly, part of the 30S ribosomal subunit. Forms a tight heterodimer with protein bS6.

Functionally, binds as a heterodimer with protein bS6 to the central domain of the 16S rRNA, where it helps stabilize the platform of the 30S subunit. This is Small ribosomal subunit protein bS18 from Pelobacter propionicus (strain DSM 2379 / NBRC 103807 / OttBd1).